Here is a 397-residue protein sequence, read N- to C-terminus: Elongation factor Tu (397 aa).

Residues 10–207 (KPHVNIGTIG…AVDTYIEEPK (198 aa)) form the tr-type G domain. Residues 19-26 (GHVDHGKT) are G1. 19 to 26 (GHVDHGKT) is a binding site for GTP. Threonine 26 lines the Mg(2+) pocket. Residues 60–64 (GITIN) form a G2 region. Positions 81–84 (DCPG) are G3. Residues 81-85 (DCPGH) and 136-139 (NKID) each bind GTP. The segment at 136 to 139 (NKID) is G4. A G5 region spans residues 177-179 (SAL).

The protein belongs to the TRAFAC class translation factor GTPase superfamily. Classic translation factor GTPase family. EF-Tu/EF-1A subfamily. In terms of assembly, monomer.

Its subcellular location is the cytoplasm. It catalyses the reaction GTP + H2O = GDP + phosphate + H(+). Its function is as follows. GTP hydrolase that promotes the GTP-dependent binding of aminoacyl-tRNA to the A-site of ribosomes during protein biosynthesis. The sequence is that of Elongation factor Tu from Metamycoplasma hominis (strain ATCC 23114 / DSM 25592 / NBRC 14850 / NCTC 10111 / PG21) (Mycoplasma hominis).